We begin with the raw amino-acid sequence, 406 residues long: uncharacterized protein (406 aa).

The interval 1-36 is disordered; sequence MDRVRSLIGNRRGRRHNRQHPPYPHSGSPSTVNLLG.

It to yeast YMR316w.

This is an uncharacterized protein from Saccharomyces cerevisiae (strain ATCC 204508 / S288c) (Baker's yeast).